The chain runs to 396 residues: S-adenosylmethionine synthase (396 aa).

His-15 provides a ligand contact to ATP. Asp-17 lines the Mg(2+) pocket. A K(+)-binding site is contributed by Glu-43. 2 residues coordinate L-methionine: Glu-56 and Gln-99. Residues 99–109 form a flexible loop region; the sequence is QSADIALGVDR. ATP-binding positions include 175-177, 241-242, Asp-250, 256-257, Ala-273, and Lys-277; these read DGK, RF, and RK. Asp-250 serves as a coordination point for L-methionine. Lys-281 contacts L-methionine.

It belongs to the AdoMet synthase family. As to quaternary structure, homotetramer; dimer of dimers. Requires Mg(2+) as cofactor. K(+) is required as a cofactor.

It localises to the cytoplasm. The catalysed reaction is L-methionine + ATP + H2O = S-adenosyl-L-methionine + phosphate + diphosphate. The protein operates within amino-acid biosynthesis; S-adenosyl-L-methionine biosynthesis; S-adenosyl-L-methionine from L-methionine: step 1/1. Catalyzes the formation of S-adenosylmethionine (AdoMet) from methionine and ATP. The overall synthetic reaction is composed of two sequential steps, AdoMet formation and the subsequent tripolyphosphate hydrolysis which occurs prior to release of AdoMet from the enzyme. This Desulfitobacterium hafniense (strain DSM 10664 / DCB-2) protein is S-adenosylmethionine synthase.